Consider the following 441-residue polypeptide: Peroxisome proliferator-activated receptor delta (441 aa).

Residues 1–58 (MEQPPGEAAEVREEEEKKEVAEAEGAPELNGGPERSLPSSSYTDLSRSSSPPSLLDQL) form a disordered region. The span at 9–21 (AEVREEEEKKEVA) shows a compositional bias: basic and acidic residues. The span at 36–55 (SLPSSSYTDLSRSSSPPSLL) shows a compositional bias: low complexity. The segment at residues 70–145 (LNMECRVCGD…LGMSHNAIRF (76 aa)) is a DNA-binding region (nuclear receptor). NR C4-type zinc fingers lie at residues 74 to 94 (CRVC…CEGC) and 111 to 133 (CERI…FQKC). The NR LBD domain maps to 211–439 (FVIHDIETLW…HPLLQEIYKD (229 aa)).

Belongs to the nuclear hormone receptor family. NR1 subfamily. In terms of assembly, heterodimer with the retinoid X receptor. Interacts (via domain NR LBD) with CRY1 and CRY2 in a ligand-dependent manner. 'Lys-48'-linked polyubiquitinated; leading to proteasomal degradation. Deubiquitinated and stabilized by OTUD3.

It is found in the nucleus. In terms of biological role, ligand-activated transcription factor key mediator of energy metabolism in adipose tissues. Receptor that binds peroxisome proliferators such as hypolipidemic drugs and fatty acids. Has a preference for poly-unsaturated fatty acids, such as gamma-linoleic acid and eicosapentanoic acid. Once activated by a ligand, the receptor binds to promoter elements of target genes. Regulates the peroxisomal beta-oxidation pathway of fatty acids. Functions as a transcription activator for the acyl-CoA oxidase gene. Decreases expression of NPC1L1 once activated by a ligand. In Canis lupus familiaris (Dog), this protein is Peroxisome proliferator-activated receptor delta (PPARD).